The sequence spans 601 residues: Oligoendopeptidase F homolog (601 aa).

His387 contributes to the Zn(2+) binding site. Glu388 is an active-site residue. 2 residues coordinate Zn(2+): His391 and His394.

The protein belongs to the peptidase M3 family. The cofactor is Zn(2+).

Functionally, hydrolyzes peptides containing between 7 and 17 amino acids with a rather wide specificity. In Lactococcus lactis subsp. lactis (strain IL1403) (Streptococcus lactis), this protein is Oligoendopeptidase F homolog (pepF).